The chain runs to 153 residues: Xanthine-guanine phosphoribosyltransferase (153 aa).

Residues 37 to 38 (RG) and 89 to 97 (DDLVDTGNT) each bind 5-phospho-alpha-D-ribose 1-diphosphate. Asp-90 lines the Mg(2+) pocket. Asp-93 and Ile-136 together coordinate guanine. Xanthine contacts are provided by Asp-93 and Ile-136. GMP is bound by residues 93–97 (DTGNT) and 135–136 (WI).

This sequence belongs to the purine/pyrimidine phosphoribosyltransferase family. XGPT subfamily. Homotetramer. Mg(2+) is required as a cofactor.

The protein localises to the cell inner membrane. The enzyme catalyses GMP + diphosphate = guanine + 5-phospho-alpha-D-ribose 1-diphosphate. It carries out the reaction XMP + diphosphate = xanthine + 5-phospho-alpha-D-ribose 1-diphosphate. It catalyses the reaction IMP + diphosphate = hypoxanthine + 5-phospho-alpha-D-ribose 1-diphosphate. Its pathway is purine metabolism; GMP biosynthesis via salvage pathway; GMP from guanine: step 1/1. It functions in the pathway purine metabolism; XMP biosynthesis via salvage pathway; XMP from xanthine: step 1/1. In terms of biological role, purine salvage pathway enzyme that catalyzes the transfer of the ribosyl-5-phosphate group from 5-phospho-alpha-D-ribose 1-diphosphate (PRPP) to the N9 position of the 6-oxopurines guanine and xanthine to form the corresponding ribonucleotides GMP (guanosine 5'-monophosphate) and XMP (xanthosine 5'-monophosphate), with the release of PPi. To a lesser extent, also acts on hypoxanthine. The sequence is that of Xanthine-guanine phosphoribosyltransferase from Pasteurella multocida (strain Pm70).